Consider the following 836-residue polypeptide: MASKRKSTTPCMVRTSQVVEQDVLEEADRAKDKGLGVPPSDVSKERWAAEPEPSSKESEVVEVRSVGESQSKKLQGGYECKYCPYSTQNLNEFTEHVDMQHPNVILNPLYVCAECNFTTKKYDSLSDHNSKFHPGETNFKLKLIKRNNQTVLEQSIEATNHVVSITASAPGSSDNDPGVSVGKTATVKTGKQKADAKKVPKKPDEAAPDNHMEGTARLVTDTAEILSRLGSVELLHDSLGHVMPSVQLPPNINLVPKVPVPLNTTKYNSALDTNATMINSFNKFPYPTQAELSWLTAASKHPEEHIRIWFATQRLKHGISWSPEEVEEARKKMFNGTIQSVPPTITVLPAQLTPTKVSQPILQTALPCQILGQPSLVLTQVTSGSTAVSCSPITLAVAGVTNHGQKRPLVTPQAAPEPKRPHIAQVPEPPPKVANTPLTPASDRKKTKLQIAHLKASFLQSQFPDDAEVYRLIEVTGLARSEIKKWFSDHRYRCQRGIVHITSESLAKDQMAITGTRHGRTYHVYPDFAAQKFKEKSQGQLKTLEDSFLKSSFPTQAEVERLRVETKLSRREIDSWFSERRKLRDSMEQAVLDSMGSGKKGSDVVAPNGALSRLDQLSGAQLAGPLPSPSSAVVQNQEQVHLLRSTFARTQWPTPQEYDQLAAKTGLVRTEIVRWFKENRCLLKTGTLSWLEQYQRHHLSDDHGHDVASRRATKHVAESPKNGSEVAHQYAKDPKALGEEESEKLVPRVKLVGDPSKDCLAGKPSEATSDRSEGSRDGQGSEENEESGIVDFVEVTVGEEDAISEKWGSWSQRVAEGTVERADSDSDSTPAEAGQA.

Positions 24–58 (LEEADRAKDKGLGVPPSDVSKERWAAEPEPSSKES) are disordered. The segment at 27–77 (ADRAKDKGLGVPPSDVSKERWAAEPEPSSKESEVVEVRSVGESQSKKLQGG) is interaction with EFNB1. The segment covering 42–58 (VSKERWAAEPEPSSKES) has biased composition (basic and acidic residues). 2 C2H2-type zinc fingers span residues 78–101 (YECK…DMQH) and 110–133 (YVCA…SKFH). Residues 168–210 (SAPGSSDNDPGVSVGKTATVKTGKQKADAKKVPKKPDEAAPDN) are disordered. The span at 192–210 (QKADAKKVPKKPDEAAPDN) shows a compositional bias: basic and acidic residues. The interval 195-358 (DAKKVPKKPD…PAQLTPTKVS (164 aa)) is required for homodimerization. DNA-binding regions (homeobox) lie at residues 263–324 (NTTK…WSPE), 439–501 (TPAS…IVHI), 530–591 (AQKF…EQAV), and 628–690 (SPSS…TLSW). The interval 263-446 (NTTKYNSALD…PLTPASDRKK (184 aa)) is required for repressor activity. Positions 263–497 (NTTKYNSALD…SDHRYRCQRG (235 aa)) are required for interaction with NFYA. Positions 317–446 (HGISWSPEEV…PLTPASDRKK (130 aa)) are required for nuclear localization. A disordered region spans residues 404-442 (GQKRPLVTPQAAPEPKRPHIAQVPEPPPKVANTPLTPAS). Lys455 is covalently cross-linked (Glycyl lysine isopeptide (Lys-Gly) (interchain with G-Cter in SUMO2)). Composition is skewed to basic and acidic residues over residues 700–709 (SDDHGHDVAS) and 730–746 (YAKD…EKLV). Residues 700–836 (SDDHGHDVAS…DSTPAEAGQA (137 aa)) are disordered. Ser824 and Ser826 each carry phosphoserine.

The protein belongs to the ZHX family. Homodimer (via homeobox domain 1). Heterodimer with ZHX1 (via homeobox domain 1). Heterodimer with ZHX3 (via homeobox domain 1). Heterodimerization with ZHX1 is not necessary for repressor activity. Interacts (via homeobox domain) with NFYA (via N-terminus). Interacts with EFNB1 intracellular domain peptide; the interaction enhances ZHX2 transcriptional repression activity.

The protein localises to the nucleus. Acts as a transcriptional repressor. Represses the promoter activity of the CDC25C gene stimulated by NFYA. May play a role in retinal development where it regulates the composition of bipolar cell populations, by promoting differentiation of bipolar OFF-type cells. In the brain, may promote maintenance and suppress differentiation of neural progenitor cells in the developing cortex. The polypeptide is Zinc fingers and homeoboxes protein 2 (Zhx2) (Rattus norvegicus (Rat)).